Here is a 314-residue protein sequence, read N- to C-terminus: MNKLKLIFAGTPDFAARHLAALLSSDHEVVAVYTQPDKPAGRGQKLTASPVKELALTHNLPVYQPASLRKEEAQAELASLGADLMVVVAYGLILPKVVLDTPRLGCINVHGSLLPRWRGAAPIQRSIWAGDTETGVTIMQMDVGLDTGAMIRKVTCPIAANETSTSLYDKLAELGPQALVDTINAMAAGETAAEEQDDALANYAEKLSKEEARIDWSMEAVAIDRCIRAFNPWPISWFEVAGQTIKVWQAEVINSDHGQPTGTLLKADKQGIDIATGLGVLRLLTLQPPGKKAMSVSDLLNSRRDWFEPGTQLN.

112–115 (SLLP) provides a ligand contact to (6S)-5,6,7,8-tetrahydrofolate.

It belongs to the Fmt family.

The enzyme catalyses L-methionyl-tRNA(fMet) + (6R)-10-formyltetrahydrofolate = N-formyl-L-methionyl-tRNA(fMet) + (6S)-5,6,7,8-tetrahydrofolate + H(+). Functionally, attaches a formyl group to the free amino group of methionyl-tRNA(fMet). The formyl group appears to play a dual role in the initiator identity of N-formylmethionyl-tRNA by promoting its recognition by IF2 and preventing the misappropriation of this tRNA by the elongation apparatus. This is Methionyl-tRNA formyltransferase from Aeromonas salmonicida (strain A449).